Consider the following 631-residue polypeptide: Phosphomethylpyrimidine synthase (631 aa).

Substrate is bound by residues Asn-239, Met-268, Tyr-297, His-333, 353 to 355 (SRG), 394 to 397 (DGLR), and Glu-433. Position 437 (His-437) interacts with Zn(2+). A substrate-binding site is contributed by Tyr-460. His-501 contacts Zn(2+). [4Fe-4S] cluster-binding residues include Cys-581, Cys-584, and Cys-589.

This sequence belongs to the ThiC family. In terms of assembly, homodimer. [4Fe-4S] cluster is required as a cofactor.

The enzyme catalyses 5-amino-1-(5-phospho-beta-D-ribosyl)imidazole + S-adenosyl-L-methionine = 4-amino-2-methyl-5-(phosphooxymethyl)pyrimidine + CO + 5'-deoxyadenosine + formate + L-methionine + 3 H(+). Its pathway is cofactor biosynthesis; thiamine diphosphate biosynthesis. Its function is as follows. Catalyzes the synthesis of the hydroxymethylpyrimidine phosphate (HMP-P) moiety of thiamine from aminoimidazole ribotide (AIR) in a radical S-adenosyl-L-methionine (SAM)-dependent reaction. This chain is Phosphomethylpyrimidine synthase, found in Salmonella typhi.